The sequence spans 590 residues: EGF-like and EMI domain-containing protein 1 (590 aa).

An N-terminal signal peptide occupies residues 1–23 (MTSPLCFWCFCVWAAANWPPGSA). In terms of domain architecture, EMI spans 44 to 104 (LSRPCAQAFI…RCCPGWIQWD (61 aa)). Residues 105–145 (DEPGCFSSLSSLGTHFSGRECSYQDTRQCLCSQGFHGPHCQ) enclose the EGF-like 1 domain. Cystine bridges form between Cys109/Cys125, Cys135/Cys144, Cys168/Cys179, Cys175/Cys188, Cys190/Cys203, Cys209/Cys219, Cys215/Cys228, Cys230/Cys243, Cys249/Cys260, Cys256/Cys269, and Cys271/Cys284. Residues 164 to 204 (NVDECAVVNGGCQQRCINTLGTFHCECDTGYRRHADERTCI) form the EGF-like 2; calcium-binding domain. The EGF-like 3 domain occupies 205–244 (KTDPCAGANGCAHLCQTENGMARCACHAGYQLSEDKKACE). In terms of domain architecture, EGF-like 4; calcium-binding spans 245–285 (DINECAGELAPCAHHCVNSKGSFTCTCHPGFELGADRKHCY). Positions 393 to 424 (RLAQNPPQPFPYLDPSLTASYEDEDNDDADSE) are disordered. Residues 413 to 424 (YEDEDNDDADSE) show a composition bias toward acidic residues. The EGF-like 5 domain occupies 445-481 (FGLDCSLSCEDCMNGGRCQEGKSGCLCPAEWTGLICN). Intrachain disulfides connect Cys449-Cys462, Cys456-Cys469, and Cys471-Cys480.

This Mus musculus (Mouse) protein is EGF-like and EMI domain-containing protein 1 (Egfem1).